Reading from the N-terminus, the 278-residue chain is HTH-type transcriptional activator RhaS (278 aa).

An HTH araC/xylS-type domain is found at 174–272; sequence NQLMAWLEDH…NWSPRDIRQG (99 aa). 2 DNA-binding regions (H-T-H motif) span residues 191–212 and 239–262; these read EAVA…KQHT and VTEI…RREF.

In terms of assembly, binds DNA as a dimer.

It is found in the cytoplasm. In terms of biological role, activates expression of the rhaBAD and rhaT operons. The protein is HTH-type transcriptional activator RhaS of Salmonella enteritidis PT4 (strain P125109).